The following is a 629-amino-acid chain: (-)-alpha pinene synthase 1, chloroplastic (629 aa).

Residues 1–48 (MSPVSVISLPSDLCLPTSFIDRSGRELNPLHITIPNVAMRRQGKLMTR) constitute a chloroplast transit peptide. Asp-380, Asp-384, and Asp-532 together coordinate Mg(2+). A DDXXD motif motif is present at residues 380 to 384 (DDMYD).

The protein belongs to the terpene synthase family. Tpsd subfamily. Mg(2+) serves as cofactor. Mn(2+) is required as a cofactor.

It localises to the plastid. Its subcellular location is the chloroplast. It carries out the reaction (2E)-geranyl diphosphate = (1S,5S)-alpha-pinene + diphosphate. The enzyme catalyses (2E)-geranyl diphosphate = (1S,5S)-beta-pinene + diphosphate. It functions in the pathway terpene metabolism; oleoresin biosynthesis. It participates in secondary metabolite biosynthesis; terpenoid biosynthesis. Functionally, monoterpene synthase (TPS) involved in the biosynthesis of monoterpene natural products included in conifer oleoresin secretions and volatile emissions; these compounds contribute to biotic and abiotic stress defense against herbivores and pathogens. Catalyzes the conversion of (2E)-geranyl diphosphate (GPP) to (-)-alpha-pinene and, to a lower extent, to (-)-beta-pinene. The protein is (-)-alpha pinene synthase 1, chloroplastic of Pinus contorta (Shore pine).